A 137-amino-acid chain; its full sequence is Gonadotropin subunit beta-2 (137 aa).

The N-terminal stretch at 1–24 (MLPFMLSSFLGASPSIWPLAPAEA) is a signal peptide. 6 cysteine pairs are disulfide-bonded: C30/C76, C44/C91, C47/C129, C55/C107, C59/C109, and C112/C119. N-linked (GlcNAc...) asparagine glycosylation occurs at N34.

The protein belongs to the glycoprotein hormones subunit beta family. Heterodimer of an alpha and a beta chain.

The protein resides in the secreted. Its function is as follows. Involved in gametogenesis and steroidogenesis. The polypeptide is Gonadotropin subunit beta-2 (cgbb) (Acanthopagrus latus (Yellowfin seabream)).